A 131-amino-acid polypeptide reads, in one-letter code: Small ribosomal subunit protein uS10m (131 aa).

It belongs to the universal ribosomal protein uS10 family.

Its subcellular location is the mitochondrion. The polypeptide is Small ribosomal subunit protein uS10m (mrps10) (Dictyostelium discoideum (Social amoeba)).